We begin with the raw amino-acid sequence, 294 residues long: Lipoyl synthase (294 aa).

Residues Cys35, Cys40, Cys46, Cys61, Cys65, Cys68, and Ser275 each contribute to the [4Fe-4S] cluster site. Residues 46 to 264 enclose the Radical SAM core domain; that stretch reads CWGGGTATVM…RDQGLALGFR (219 aa).

This sequence belongs to the radical SAM superfamily. Lipoyl synthase family. The cofactor is [4Fe-4S] cluster.

Its subcellular location is the cytoplasm. It catalyses the reaction [[Fe-S] cluster scaffold protein carrying a second [4Fe-4S](2+) cluster] + N(6)-octanoyl-L-lysyl-[protein] + 2 oxidized [2Fe-2S]-[ferredoxin] + 2 S-adenosyl-L-methionine + 4 H(+) = [[Fe-S] cluster scaffold protein] + N(6)-[(R)-dihydrolipoyl]-L-lysyl-[protein] + 4 Fe(3+) + 2 hydrogen sulfide + 2 5'-deoxyadenosine + 2 L-methionine + 2 reduced [2Fe-2S]-[ferredoxin]. It participates in protein modification; protein lipoylation via endogenous pathway; protein N(6)-(lipoyl)lysine from octanoyl-[acyl-carrier-protein]: step 2/2. Catalyzes the radical-mediated insertion of two sulfur atoms into the C-6 and C-8 positions of the octanoyl moiety bound to the lipoyl domains of lipoate-dependent enzymes, thereby converting the octanoylated domains into lipoylated derivatives. This Anaeromyxobacter dehalogenans (strain 2CP-C) protein is Lipoyl synthase.